The chain runs to 491 residues: DEAD-box ATP-dependent RNA helicase 36 (491 aa).

The segment covering 1–10 (MEEPTPEEEG) has biased composition (acidic residues). The segment at 1–56 (MEEPTPEEEGGITIMSKSRKNPKTVVNIQSQKLDSDQNTPQFEKFTNPNPSSDTTS) is disordered. The span at 24–56 (TVVNIQSQKLDSDQNTPQFEKFTNPNPSSDTTS) shows a compositional bias: polar residues. The short motif at 58–86 (TNFEGLGLAEWAVETCKELGMRKPTPVQT) is the Q motif element. The Helicase ATP-binding domain maps to 89-262 (VPKILAGRDV…EHSSNKAYFY (174 aa)). 102 to 109 (AQTGSGKT) provides a ligand contact to ATP. Positions 210–213 (DEAD) match the DEAD box motif. One can recognise a Helicase C-terminal domain in the interval 289–438 (YLVHILSQME…NKKVITDSLE (150 aa)). A disordered region spans residues 471–491 (KTLADKGLLKKRGKRQKSTEN). Over residues 479–491 (LKKRGKRQKSTEN) the composition is skewed to basic residues.

It belongs to the DEAD box helicase family. DDX49/DBP8 subfamily.

It carries out the reaction ATP + H2O = ADP + phosphate + H(+). The protein is DEAD-box ATP-dependent RNA helicase 36 (RH36) of Arabidopsis thaliana (Mouse-ear cress).